The primary structure comprises 478 residues: Cytochrome c-552 (478 aa).

An N-terminal signal peptide occupies residues methionine 1 to alanine 26. Residue histidine 94 coordinates heme c. Residues cysteine 122, cysteine 125, and lysine 126 each contribute to the heme site. Residues cysteine 160, cysteine 163, histidine 164, cysteine 209, cysteine 212, and histidine 213 each contribute to the heme c site. Residues glutamate 215, tyrosine 216, lysine 261, and glutamine 263 each coordinate Ca(2+). Tyrosine 216 contributes to the substrate binding site. Histidine 264 lines the substrate pocket. Heme c contacts are provided by histidine 275, cysteine 282, cysteine 285, histidine 286, histidine 301, cysteine 314, cysteine 317, histidine 318, and histidine 393.

The protein belongs to the cytochrome c-552 family. It depends on Ca(2+) as a cofactor. The cofactor is heme c.

It localises to the periplasm. It catalyses the reaction 6 Fe(III)-[cytochrome c] + NH4(+) + 2 H2O = 6 Fe(II)-[cytochrome c] + nitrite + 8 H(+). The protein operates within nitrogen metabolism; nitrate reduction (assimilation). Catalyzes the reduction of nitrite to ammonia, consuming six electrons in the process. This is Cytochrome c-552 from Escherichia coli O6:H1 (strain CFT073 / ATCC 700928 / UPEC).